A 433-amino-acid chain; its full sequence is 23S rRNA (uracil(1939)-C(5))-methyltransferase RlmD (433 aa).

The 59-residue stretch at 10 to 68 (RTTTRQIITVSVNDLDSFGQGVARHNGKTLFIPGLLPQENAEVAVTEDKKQYARAKVVR) folds into the TRAM domain. Residues Cys-81, Cys-87, Cys-90, and Cys-162 each coordinate [4Fe-4S] cluster. Residues Gln-265, Phe-294, Asn-299, Glu-315, Asn-342, and Asp-363 each coordinate S-adenosyl-L-methionine. Cys-389 functions as the Nucleophile in the catalytic mechanism.

The protein belongs to the class I-like SAM-binding methyltransferase superfamily. RNA M5U methyltransferase family. RlmD subfamily.

It carries out the reaction uridine(1939) in 23S rRNA + S-adenosyl-L-methionine = 5-methyluridine(1939) in 23S rRNA + S-adenosyl-L-homocysteine + H(+). In terms of biological role, catalyzes the formation of 5-methyl-uridine at position 1939 (m5U1939) in 23S rRNA. This chain is 23S rRNA (uracil(1939)-C(5))-methyltransferase RlmD, found in Shigella flexneri serotype 5b (strain 8401).